A 204-amino-acid chain; its full sequence is Peptide deformylase (204 aa).

Cys131 and His174 together coordinate Fe cation. Residue Glu175 is part of the active site. His178 is a Fe cation binding site.

This sequence belongs to the polypeptide deformylase family. Fe(2+) is required as a cofactor.

It catalyses the reaction N-terminal N-formyl-L-methionyl-[peptide] + H2O = N-terminal L-methionyl-[peptide] + formate. Its function is as follows. Removes the formyl group from the N-terminal Met of newly synthesized proteins. Requires at least a dipeptide for an efficient rate of reaction. N-terminal L-methionine is a prerequisite for activity but the enzyme has broad specificity at other positions. In Streptococcus mutans serotype c (strain ATCC 700610 / UA159), this protein is Peptide deformylase.